The primary structure comprises 393 residues: NAD(P)H-quinone oxidoreductase subunit H, chloroplastic (393 aa).

Belongs to the complex I 49 kDa subunit family. NDH is composed of at least 16 different subunits, 5 of which are encoded in the nucleus.

The protein resides in the plastid. Its subcellular location is the chloroplast thylakoid membrane. It catalyses the reaction a plastoquinone + NADH + (n+1) H(+)(in) = a plastoquinol + NAD(+) + n H(+)(out). It carries out the reaction a plastoquinone + NADPH + (n+1) H(+)(in) = a plastoquinol + NADP(+) + n H(+)(out). Functionally, NDH shuttles electrons from NAD(P)H:plastoquinone, via FMN and iron-sulfur (Fe-S) centers, to quinones in the photosynthetic chain and possibly in a chloroplast respiratory chain. The immediate electron acceptor for the enzyme in this species is believed to be plastoquinone. Couples the redox reaction to proton translocation, and thus conserves the redox energy in a proton gradient. The chain is NAD(P)H-quinone oxidoreductase subunit H, chloroplastic from Acorus calamus var. americanus (American sweet flag).